The primary structure comprises 90 residues: Small ribosomal subunit protein uS15 (90 aa).

The protein belongs to the universal ribosomal protein uS15 family. Part of the 30S ribosomal subunit. Forms a bridge to the 50S subunit in the 70S ribosome, contacting the 23S rRNA.

One of the primary rRNA binding proteins, it binds directly to 16S rRNA where it helps nucleate assembly of the platform of the 30S subunit by binding and bridging several RNA helices of the 16S rRNA. In terms of biological role, forms an intersubunit bridge (bridge B4) with the 23S rRNA of the 50S subunit in the ribosome. In Campylobacter curvus (strain 525.92), this protein is Small ribosomal subunit protein uS15.